Here is a 497-residue protein sequence, read N- to C-terminus: L-asparagine permease (497 aa).

The next 12 helical transmembrane spans lie at 34 to 54 (QVQM…GAGA), 58 to 78 (MAGP…FFIL), 109 to 129 (VAGW…ITAV), 146 to 166 (VFAL…VKWF), 171 to 191 (FWFA…GTIF), 219 to 239 (LLPA…IELV), 264 to 284 (IGLF…WNAY), 298 to 318 (LGVP…ALSS), 353 to 373 (YAGI…NYLV), 378 to 398 (FEIV…FIMV), 422 to 442 (APFT…LMAF), and 448 to 468 (TYTI…WFGV).

It belongs to the amino acid-polyamine-organocation (APC) superfamily. Amino acid transporter (AAT) (TC 2.A.3.1) family.

It is found in the cell inner membrane. The protein is L-asparagine permease (ansP) of Salmonella typhimurium (strain LT2 / SGSC1412 / ATCC 700720).